Here is a 464-residue protein sequence, read N- to C-terminus: Kynureninase (464 aa).

At Met-1 the chain carries N-acetylmethionine. Residues Leu-137, Thr-138, 165–168 (FPSD), Ser-221, Asp-250, His-253, and Tyr-275 contribute to the pyridoxal 5'-phosphate site. N6-(pyridoxal phosphate)lysine is present on Lys-276. 2 residues coordinate pyridoxal 5'-phosphate: Trp-305 and Asn-333.

This sequence belongs to the kynureninase family. As to quaternary structure, homodimer. The cofactor is pyridoxal 5'-phosphate.

It is found in the cytoplasm. The protein localises to the cytosol. The catalysed reaction is L-kynurenine + H2O = anthranilate + L-alanine + H(+). It catalyses the reaction 3-hydroxy-L-kynurenine + H2O = 3-hydroxyanthranilate + L-alanine + H(+). The protein operates within amino-acid degradation; L-kynurenine degradation; L-alanine and anthranilate from L-kynurenine: step 1/1. It participates in cofactor biosynthesis; NAD(+) biosynthesis; quinolinate from L-kynurenine: step 2/3. In terms of biological role, catalyzes the cleavage of L-kynurenine (L-Kyn) and L-3-hydroxykynurenine (L-3OHKyn) into anthranilic acid (AA) and 3-hydroxyanthranilic acid (3-OHAA), respectively. Has a preference for the L-3-hydroxy form. Also has cysteine-conjugate-beta-lyase activity. This chain is Kynureninase (Kynu), found in Mus musculus (Mouse).